The following is an 88-amino-acid chain: Small ribosomal subunit protein uS17 (88 aa).

This sequence belongs to the universal ribosomal protein uS17 family. In terms of assembly, part of the 30S ribosomal subunit.

One of the primary rRNA binding proteins, it binds specifically to the 5'-end of 16S ribosomal RNA. This chain is Small ribosomal subunit protein uS17, found in Lactobacillus acidophilus (strain ATCC 700396 / NCK56 / N2 / NCFM).